We begin with the raw amino-acid sequence, 284 residues long: D-tagatose-1,6-bisphosphate aldolase subunit GatY (284 aa).

Asp-82 acts as the Proton donor in catalysis. The Zn(2+) site is built by His-83 and His-180. Residue Gly-181 participates in dihydroxyacetone phosphate binding. Zn(2+) is bound at residue His-208. Dihydroxyacetone phosphate-binding positions include 209–211 (GAS) and 230–233 (NVAT).

It belongs to the class II fructose-bisphosphate aldolase family. TagBP aldolase GatY subfamily. In terms of assembly, forms a complex with GatZ. The cofactor is Zn(2+).

The enzyme catalyses D-tagatofuranose 1,6-bisphosphate = D-glyceraldehyde 3-phosphate + dihydroxyacetone phosphate. It functions in the pathway carbohydrate metabolism; D-tagatose 6-phosphate degradation; D-glyceraldehyde 3-phosphate and glycerone phosphate from D-tagatose 6-phosphate: step 2/2. In terms of biological role, catalytic subunit of the tagatose-1,6-bisphosphate aldolase GatYZ, which catalyzes the reversible aldol condensation of dihydroxyacetone phosphate (DHAP or glycerone-phosphate) with glyceraldehyde 3-phosphate (G3P) to produce tagatose 1,6-bisphosphate (TBP). Requires GatZ subunit for full activity and stability. Is involved in the catabolism of galactitol. The chain is D-tagatose-1,6-bisphosphate aldolase subunit GatY from Escherichia coli O6:K15:H31 (strain 536 / UPEC).